A 203-amino-acid chain; its full sequence is Cutinase pbc1 (203 aa).

Residues 1-18 (MKVTALGNTLTGFGQALA) form the signal peptide. Cysteine 32 and cysteine 107 are oxidised to a cystine. Serine 118 acts as the Nucleophile in catalysis. Cysteine 166 and cysteine 173 are disulfide-bonded. Residue histidine 170 is part of the active site. Histidine 183 serves as the catalytic Proton donor/acceptor.

Belongs to the cutinase family. Post-translationally, the 2 disulfide bonds play a critical role in holding the catalytic residues in juxta-position; reduction of the disulfide bridges results in the complete inactivation of the enzyme.

It is found in the secreted. It carries out the reaction cutin + H2O = cutin monomers.. In terms of biological role, catalyzes the hydrolysis of complex carboxylic polyesters found in the cell wall of plants. Degrades cutin, a macromolecule that forms the structure of the plant cuticle. Allows pathogenic fungi to penetrate through the cuticular barrier into the host plant during the initial stage of fungal infection. The chain is Cutinase pbc1 from Pyrenopeziza brassicae.